The following is a 209-amino-acid chain: MSVHEVNHPLVKHKIGLMREAGISTKKFRELTSEIACLLAYEASRDFQIEPRTITGWDGSKVMIQQLKGKKVTVVPILRAGIGMLDGVLDMIPNAKVSVVGLARNEETLEAHTYFERFVGSLDERLALIIDPMLATGGSMAATIEMLKKNGCLQIRVLCLVAAPEGLAKITAAYPEIDIYVAAIDERLNEQGYILPGLGDAGDKIFGTK.

5-phospho-alpha-D-ribose 1-diphosphate is bound by residues Arg79, Arg104, and 131-139; that span reads DPMLATGGS. Uracil contacts are provided by residues Ile194 and 199-201; that span reads GDA. A 5-phospho-alpha-D-ribose 1-diphosphate-binding site is contributed by Asp200.

Belongs to the UPRTase family. Mg(2+) serves as cofactor.

It carries out the reaction UMP + diphosphate = 5-phospho-alpha-D-ribose 1-diphosphate + uracil. The protein operates within pyrimidine metabolism; UMP biosynthesis via salvage pathway; UMP from uracil: step 1/1. Its activity is regulated as follows. Allosterically activated by GTP. Catalyzes the conversion of uracil and 5-phospho-alpha-D-ribose 1-diphosphate (PRPP) to UMP and diphosphate. This is Uracil phosphoribosyltransferase from Citrifermentans bemidjiense (strain ATCC BAA-1014 / DSM 16622 / JCM 12645 / Bem) (Geobacter bemidjiensis).